The following is a 252-amino-acid chain: HTH-type transcriptional regulator XynR (252 aa).

The 63-residue stretch at 4–66 (IQSVERALQI…PENGKYRLGM (63 aa)) folds into the HTH iclR-type domain. Positions 25-45 (KITDISKLMGLSKSTLHSLLK) form a DNA-binding region, H-T-H motif. Residues 81–250 (IRQKAKGWLT…GLALSRALGY (170 aa)) enclose the IclR-ED domain.

Activity may be controlled by xylonate. Its function is as follows. Involved in regulation of xylonate catabolism. Represses the expression of both yagA and yagEF operons. Binds mainly at a single site within the spacer of the bidirectional transcription units yagA and yagEF. The polypeptide is HTH-type transcriptional regulator XynR (Escherichia coli (strain K12)).